The sequence spans 700 residues: MGSLSPLSLLWGLLLLQGVLRPLRGDPVFIPPFIRMSSPEVRATLVGGSEDVAVSLSLLQVEEGVLPVPTCGGRRNETVDWNVTVSPRESTLEVTIRWKRGLDWCSADETASFSEPPCVLQMLLVSASHNASCLAHLLIQVEIYPNTSVTHNASENMTVIPNQVYQPLGPCPCDLTAKACDIQCCCDQDCQPEVRELFAQSCFSGVFGGHVSPPSHHHCAVSTTHQTPDWFPLLCVQSPPSTSPFLGHFYHGATSPRHSPGFEAHLHFDLRDFADASYKQGDPIMTTEGYFTIPQVSLAGQCLQDAPVAFLRNFDSVCTMDLEVHQGRDEIVLENMKIRTTGGPVTPTVTYEEAIDLDKFITSPDTVLSVGSAPRNVNVEEHYVFRWQNNSISGLDITVIRAEISAQQRGMMTQRFTVKFLSHHSGGEKEFSGNPGYQLGKPVRALHTAGMNVSTLHLWQPAGRGLCTAAALRPILFGENAFSGCLLEVGIKENCTQLRENVLQRLDLLTQATHVARRGNSDYSDLSDGWLEIIRAEAPDTGADLPLSSVNGVCPEVPARLSIRILTAEAGSVEGVAQREILAVETRFSTVTWQYQCGLTCEDKADLLPLSASVEFINVPAQMPHPPTRFQINFTEYDCTRNELCWPQLLYPLTQYYQGEPQSQCVAKGLMLLSLLMLAILLRHPWVRMCKARDSAAIYH.

Positions 1 to 25 (MGSLSPLSLLWGLLLLQGVLRPLRG) are cleaved as a signal peptide. The Extracellular segment spans residues 26 to 665 (DPVFIPPFIR…YYQGEPQSQC (640 aa)). Residues Asn-76, Asn-82, Asn-146, Asn-156, and Asn-389 are each glycosylated (N-linked (GlcNAc...) asparagine). The helical transmembrane segment at 666-682 (VAKGLMLLSLLMLAILL) threads the bilayer. The Cytoplasmic segment spans residues 683–700 (RHPWVRMCKARDSAAIYH).

Belongs to the tectonic family. As to quaternary structure, part of the tectonic-like complex (also named B9 complex). Significant expression is observed in brain, kidney and eye.

The protein resides in the membrane. Its subcellular location is the cytoplasm. It is found in the cytoskeleton. It localises to the cilium basal body. In terms of biological role, component of the tectonic-like complex, a complex localized at the transition zone of primary cilia and acting as a barrier that prevents diffusion of transmembrane proteins between the cilia and plasma membranes. Required for hedgehog signaling transduction. This Mus musculus (Mouse) protein is Tectonic-2 (Tctn2).